A 427-amino-acid polypeptide reads, in one-letter code: Putative dipeptidase MCYG_02918 (427 aa).

A signal peptide spans 1–29 (MAPERRSRLSDAGILVSLLALTSLVPVQA). 3 residues coordinate Zn(2+): His55, Asp57, and Glu167. A disulfide bond links Cys106 and Cys196. A substrate-binding site is contributed by His194. The Zn(2+) site is built by His238 and His259. Substrate contacts are provided by Arg270 and Asp330. Asn402 is a glycosylation site (N-linked (GlcNAc...) asparagine).

It belongs to the metallo-dependent hydrolases superfamily. Peptidase M19 family. Requires Zn(2+) as cofactor.

The enzyme catalyses an L-aminoacyl-L-amino acid + H2O = 2 an L-alpha-amino acid. Functionally, hydrolyzes a wide range of dipeptides. This chain is Putative dipeptidase MCYG_02918, found in Arthroderma otae (strain ATCC MYA-4605 / CBS 113480) (Microsporum canis).